Consider the following 96-residue polypeptide: Citrate lyase acyl carrier protein (96 aa).

Position 14 is an O-(phosphoribosyl dephospho-coenzyme A)serine (S14).

It belongs to the CitD family. In terms of assembly, oligomer with a subunit composition of (alpha,beta,gamma)6.

Its subcellular location is the cytoplasm. Functionally, covalent carrier of the coenzyme of citrate lyase. This is Citrate lyase acyl carrier protein from Pectobacterium carotovorum subsp. carotovorum (strain PC1).